Here is a 733-residue protein sequence, read N- to C-terminus: EF-hand domain-containing family member C2 (733 aa).

3 consecutive DM10 domains span residues 61 to 168 (DKQV…TKIG), 212 to 354 (DRKV…RTKY), and 416 to 523 (ISNT…ERNS).

Microtubule inner protein component of sperm flagellar doublet microtubules. Expressed in trachea multiciliated cells.

Its subcellular location is the cytoplasm. The protein resides in the cytoskeleton. It is found in the cilium axoneme. It localises to the flagellum axoneme. In terms of biological role, microtubule inner protein (MIP) part of the dynein-decorated doublet microtubules (DMTs) in cilia axoneme, which is required for motile cilia beating. The polypeptide is EF-hand domain-containing family member C2 (EFHC2) (Bos taurus (Bovine)).